We begin with the raw amino-acid sequence, 481 residues long: Zinc metalloproteinase/disintegrin (481 aa).

Residues 1–20 (MIQVLLVTICLAVFPYQGSS) form the signal peptide. The propeptide occupies 21-190 (IILESGNVDD…KASQLYLTPE (170 aa)). Residues 197–392 (RYIKLAIVVD…DNPQCILNAP (196 aa)) enclose the Peptidase M12B domain. Disulfide bonds link cysteine 308–cysteine 387, cysteine 349–cysteine 371, and cysteine 351–cysteine 354. Histidine 333 contributes to the Zn(2+) binding site. Glutamate 334 is a catalytic residue. Residues histidine 337 and histidine 343 each coordinate Zn(2+). Positions 393-408 (LRTDTVSTPVSGNEFL) are excised as a propeptide. The Disintegrin domain maps to 400 to 481 (TPVSGNEFLE…ADCPRNGLYS (82 aa)). 6 cysteine pairs are disulfide-bonded: cysteine 414–cysteine 429, cysteine 416–cysteine 424, cysteine 423–cysteine 446, cysteine 437–cysteine 443, cysteine 442–cysteine 467, and cysteine 455–cysteine 474. The short motif at 459-461 (RGD) is the Cell attachment site element.

This sequence belongs to the venom metalloproteinase (M12B) family. P-II subfamily. P-IIa sub-subfamily. Monomer. The cofactor is Zn(2+). As to expression, expressed by the venom gland.

The protein resides in the secreted. Impairs hemostasis in the envenomed animal. Functionally, inhibits platelet aggregation induced by ADP, thrombin, platelet-activating factor and collagen. Acts by inhibiting fibrinogen interaction with platelet receptors GPIIb/GPIIIa (ITGA2B/ITGB3). This chain is Zinc metalloproteinase/disintegrin, found in Protobothrops elegans (Elegant pitviper).